The chain runs to 213 residues: Homeobox protein koza (213 aa).

The segment at 24 to 72 (ILSHMGPGSKEKSLGFPKTDQDQDSSLRDTEEKYASEKLQSSSQPAEIH) is disordered. The segment covering 32-59 (SKEKSLGFPKTDQDQDSSLRDTEEKYAS) has biased composition (basic and acidic residues). Positions 102–161 (QKRSRAAFSHSQVIELERKFSSQKYLSAPERAQLAKSLKLTETQVKIWFQNRRYKTKRKQ) form a DNA-binding region, homeobox.

This sequence belongs to the NK-3 homeobox family. As to expression, expressed in the muscle layer of embryonic somites. In tailbud embryos, expressed throughout the entire myotome but at the mid-tailbud stage (stage 32), expression becomes restricted to the outer periphery of the somite so that by the tadpole stage only the outer, type I cells show expression. Also expressed in the dorsal cement gland and in the myocardial layer of the developing heart. In all tissues, expression begins after terminal differentiation.

It localises to the nucleus. May regulate cell proliferation in a tissue-specific manner. The polypeptide is Homeobox protein koza (Xenopus laevis (African clawed frog)).